A 241-amino-acid chain; its full sequence is Uridylate kinase (241 aa).

15–18 (KLSG) is an ATP binding site. Positions 23–28 (GTEGFG) are involved in allosteric activation by GTP. Position 57 (glycine 57) interacts with UMP. ATP contacts are provided by glycine 58 and arginine 62. UMP contacts are provided by residues aspartate 77 and 138-145 (TGNPFFTT). ATP is bound by residues threonine 165, phenylalanine 171, and aspartate 174.

Belongs to the UMP kinase family. Homohexamer.

It is found in the cytoplasm. It carries out the reaction UMP + ATP = UDP + ADP. It participates in pyrimidine metabolism; CTP biosynthesis via de novo pathway; UDP from UMP (UMPK route): step 1/1. Allosterically activated by GTP. Inhibited by UTP. Catalyzes the reversible phosphorylation of UMP to UDP. The chain is Uridylate kinase from Shigella dysenteriae serotype 1 (strain Sd197).